A 138-amino-acid polypeptide reads, in one-letter code: Acidic phospholipase A2 BITP01A (138 aa).

The signal sequence occupies residues 1 to 16 (MRTLWIMAVLLVGVEG). Intrachain disulfides connect cysteine 42–cysteine 131, cysteine 44–cysteine 60, cysteine 59–cysteine 111, cysteine 65–cysteine 138, cysteine 66–cysteine 104, cysteine 73–cysteine 97, and cysteine 91–cysteine 102. Positions 43, 45, and 47 each coordinate Ca(2+). The active site involves histidine 63. Aspartate 64 lines the Ca(2+) pocket. The active site involves aspartate 105.

Ca(2+) is required as a cofactor. As to expression, expressed by the venom gland.

The protein resides in the secreted. The catalysed reaction is a 1,2-diacyl-sn-glycero-3-phosphocholine + H2O = a 1-acyl-sn-glycero-3-phosphocholine + a fatty acid + H(+). Its function is as follows. Snake venom phospholipase A2 (PLA2) that induces edema in mice, produces neuromuscular blockade in chick biventer cervicis, increases CK release and produces myonecrosis. PLA2 catalyzes the calcium-dependent hydrolysis of the 2-acyl groups in 3-sn-phosphoglycerides. In Bothrops insularis (Golden lancehead), this protein is Acidic phospholipase A2 BITP01A.